Here is a 493-residue protein sequence, read N- to C-terminus: Aspartyl/glutamyl-tRNA(Asn/Gln) amidotransferase subunit B (493 aa).

Residues 268–291 (HYQEADGSTSKGRPKETAEDYRYF) are disordered. Basic and acidic residues predominate over residues 280–291 (RPKETAEDYRYF).

This sequence belongs to the GatB/GatE family. GatB subfamily. As to quaternary structure, heterotrimer of A, B and C subunits.

It carries out the reaction L-glutamyl-tRNA(Gln) + L-glutamine + ATP + H2O = L-glutaminyl-tRNA(Gln) + L-glutamate + ADP + phosphate + H(+). The enzyme catalyses L-aspartyl-tRNA(Asn) + L-glutamine + ATP + H2O = L-asparaginyl-tRNA(Asn) + L-glutamate + ADP + phosphate + 2 H(+). Its function is as follows. Allows the formation of correctly charged Asn-tRNA(Asn) or Gln-tRNA(Gln) through the transamidation of misacylated Asp-tRNA(Asn) or Glu-tRNA(Gln) in organisms which lack either or both of asparaginyl-tRNA or glutaminyl-tRNA synthetases. The reaction takes place in the presence of glutamine and ATP through an activated phospho-Asp-tRNA(Asn) or phospho-Glu-tRNA(Gln). This chain is Aspartyl/glutamyl-tRNA(Asn/Gln) amidotransferase subunit B, found in Corynebacterium glutamicum (strain ATCC 13032 / DSM 20300 / JCM 1318 / BCRC 11384 / CCUG 27702 / LMG 3730 / NBRC 12168 / NCIMB 10025 / NRRL B-2784 / 534).